Reading from the N-terminus, the 396-residue chain is Argininosuccinate synthase (396 aa).

9–17 (AFSGGLDTT) contributes to the ATP binding site. Residue Tyr86 coordinates L-citrulline. Residue Gly116 coordinates ATP. 3 residues coordinate L-aspartate: Thr118, Asn122, and Asp123. Asn122 is an L-citrulline binding site. Positions 126, 172, 181, 254, and 266 each coordinate L-citrulline.

The protein belongs to the argininosuccinate synthase family. Type 1 subfamily. Homotetramer.

Its subcellular location is the cytoplasm. It carries out the reaction L-citrulline + L-aspartate + ATP = 2-(N(omega)-L-arginino)succinate + AMP + diphosphate + H(+). Its pathway is amino-acid biosynthesis; L-arginine biosynthesis; L-arginine from L-ornithine and carbamoyl phosphate: step 2/3. The polypeptide is Argininosuccinate synthase (Halobacterium salinarum (strain ATCC 700922 / JCM 11081 / NRC-1) (Halobacterium halobium)).